A 329-amino-acid polypeptide reads, in one-letter code: Quinone-oxidoreductase homolog, chloroplastic (329 aa).

The protein belongs to the zinc-containing alcohol dehydrogenase family. Quinone oxidoreductase subfamily. In terms of processing, the transit peptide is not cleaved.

It is found in the plastid. It localises to the chloroplast inner membrane. The protein is Quinone-oxidoreductase homolog, chloroplastic (QOR) of Spinacia oleracea (Spinach).